Here is a 162-residue protein sequence, read N- to C-terminus: UPF0460 protein y4xD (162 aa).

Belongs to the UPF0460 family.

The chain is UPF0460 protein y4xD from Sinorhizobium fredii (strain NBRC 101917 / NGR234).